The following is a 279-amino-acid chain: Membrane protein insertase YidC (279 aa).

The N-terminal stretch at 1-22 (MKHLKRNMALLSVAALSFILTA) is a signal peptide. Residue C23 is the site of N-palmitoyl cysteine attachment. C23 carries S-diacylglycerol cysteine lipidation. The next 5 membrane-spanning stretches (helical) occupy residues 35 to 55 (IWDGVIVYNFSRFIIYLSKLF), 59 to 79 (YGWGIIVFTIIIRIIILPLMI), 129 to 149 (MAGCLPLIIQLPVMYALYAAV), 170 to 190 (PYFILPILAALFTFMSTWLSM), and 210 to 230 (PLVILITALNFPAAITLYWVV). Over residues 253–268 (EEKIQTEKAKRKAIEK) the composition is skewed to basic and acidic residues. The segment at 253–279 (EEKIQTEKAKRKAIEKAKRRAMKSKRK) is disordered. Basic residues predominate over residues 269-279 (AKRRAMKSKRK).

The protein belongs to the OXA1/ALB3/YidC family. Type 2 subfamily.

The protein localises to the cell membrane. Functionally, required for the insertion and/or proper folding and/or complex formation of integral membrane proteins into the membrane. Involved in integration of membrane proteins that insert both dependently and independently of the Sec translocase complex, as well as at least some lipoproteins. In Pediococcus pentosaceus (strain ATCC 25745 / CCUG 21536 / LMG 10740 / 183-1w), this protein is Membrane protein insertase YidC.